Reading from the N-terminus, the 1435-residue chain is MGARASVLSGGELDRWEKIRLRPGGKKKYKLKHIVWASRELERFAVNPSLLETSEGCRQILGQLQSSLQTGSEELKSLYNTVATLYCVHQRIEVKDTKEALDKIEEEQNKSKKKAQQAAADTGNSSQVSQNYPIVQNIQGQMVHQAISPRTLNAWVKVVEEKAFSPEVIPMFSALSEGATPQDLNTMLNTVGGHQAAMQMLKETINEEAAEWDRLHPVQAGPVAPGQMREPRGSDIAGTTSTLQEQIGWMTNNPPIPVGEIYKRWIILGLNKIVRMYSPSSILDIKQGPKEPFRDYVDRFYKTLRAEQASQEVKNWMTETLLVQNANPDCKTILKALGPGATLEEMMTACQGVGGPGHKARVLAEAMSQVTNSATIMMQRGNFRNQRKTVKCFNCGKEGHIAKNCRAPRKKGCWKCGKEGHQMKDCTERQANFFRENLAFPQGKAREFSSEQTRANSPTRRELQVWGGDNNSLSEAGADRQGTVSLSFPQITLWQRPLVTIKVGGQLKEALLDTGADDTVLEDMSLPGRWKPKMIGGIGGFIKVRQYEQIDIEICGHKAKGTVLVGPTPVNIIGRNLLTQIGCTLNFPISPIETVPVKLKPGMDGPKVKQWPLTEEKIKALVEICTEMEKEGKISKIGPENPYNTPVFAIKKKDSTKWRKLVDFRELNKRTQDFWEVQLGIPHPAGLKKKKSVTVLDVGDAYFSVPLDEDFRKYTAFTIPSINNETPGIRYQYNVLPQGWKGSPAIFQSSMTKILEPFRKQNPDIVIYQYMDDLYVGSDLEIGQHRAKIEDLRQHLLKWGFTTPDKKHQKEPPFLWMGYELHPDKWTVQPIVLPEKDSWTVNDIQKLVGKLNWASQIYAGIKVKQLCKLLRGTKALTEVVPLTEEAELELAENREILKEPVHGVYYDPTKDLIAELQKQGQGQWTYQIYQEPYKNLKTGKYARMRGAHTNDVKQLTEAVQKIATESIVIWGKTPKFKLPIQKETWEAWWTDYWQATWIPEWEFVNTPPLVKLWYQLEKEPIVGAETFYVDGAANRDTKSGKAGYVTDRGRQKVVSLADTTNQKTELQAIHLALQDSGLEVNIVTDSQYALGIIQAQPDKSESELVSQIIEQLIKKEKVYLAWVPAHKGIGGNEQVDKLVSAGIRKVLFLDGIDKAQEEHEKYHTNWRAMASDFNLPPVVAKEIVASCNKCQLKGEAMHGQVDCSPGIWQLDCTHLEGKVILVAVHVASGYIEAEVIPAETGQETAYFLLKLAGRWPVKTIHTDNGSNFTSTTVKAACWWAGIKQEFGIPYNPQSQGVVESMNKELKKIIGQVRDQAEHLKTAVQMAVFIHNFKRKGGIGGYSAGERIVDIIASDIQTKELQKQITKIQNFRVYYRDSRDPLWKGPAKLLWKGEGAVVIQDNSDIKVVPRRKAKIIRDYGKQMAGDDCVASRQDED.

Gly-2 is lipidated: N-myristoyl glycine; by host. The interaction with Gp41 stretch occupies residues 7–31 (VLSGGELDRWEKIRLRPGGKKKYKL). The tract at residues 8 to 43 (LSGGELDRWEKIRLRPGGKKKYKLKHIVWASRELER) is interaction with host CALM1. The segment at 12-19 (ELDRWEKI) is interaction with host AP3D1. Positions 14–33 (DRWEKIRLRPGGKKKYKLKH) are interaction with membrane phosphatidylinositol 4,5-bisphosphate and RNA. The Nuclear export signal signature appears at 16 to 22 (WEKIRLR). The Nuclear localization signal signature appears at 26–32 (KKKYKLK). The segment at 73-77 (EELKS) is interaction with membrane phosphatidylinositol 4,5-bisphosphate. The tract at residues 106–127 (EEQNKSKKKAQQAAADTGNSSQ) is disordered. At Tyr-132 the chain carries Phosphotyrosine; by host. The segment at 189-227 (NTVGGHQAAMQMLKETINEEAAEWDRLHPVQAGPVAPGQ) is interaction with human PPIA/CYPA and NUP153. Positions 277-363 (YSPSSILDIK…GGPGHKARVL (87 aa)) are dimerization/Multimerization of capsid protein p24. CCHC-type zinc fingers lie at residues 390–407 (VKCF…NCRA) and 411–428 (KGCW…DCTE). Residues 489–493 (PQITL) are dimerization of protease. The Peptidase A2 domain occupies 508–577 (KEALLDTGAD…TPVNIIGRNL (70 aa)). The active-site For protease activity; shared with dimeric partner is Asp-513. Dimerization of protease stretches follow at residues 537–543 (GIGGFIK) and 576–588 (NLLT…LNFP). Positions 631 to 821 (EGKISKIGPE…PPFLWMGYEL (191 aa)) constitute a Reverse transcriptase domain. 3 residues coordinate Mg(2+): Asp-697, Asp-772, and Asp-773. The tract at residues 814-822 (FLWMGYELH) is RT 'primer grip'. A Tryptophan repeat motif motif is present at residues 985-1001 (WEAWWTDYWQATWIPEW). The RNase H type-1 domain occupies 1021–1144 (IVGAETFYVD…VDKLVSAGIR (124 aa)). Mg(2+) contacts are provided by Asp-1030, Glu-1065, Asp-1085, and Asp-1136. An Integrase-type zinc finger spans residues 1150-1191 (DGIDKAQEEHEKYHTNWRAMASDFNLPPVVAKEIVASCNKCQ). Zn(2+) contacts are provided by His-1159, His-1163, Cys-1187, and Cys-1190. The region spanning 1201 to 1351 (VDCSPGIWQL…SAGERIVDII (151 aa)) is the Integrase catalytic domain. Mg(2+) contacts are provided by Asp-1211, Asp-1263, and Glu-1299. A DNA-binding region (integrase-type) is located at residues 1370–1417 (FRVYYRDSRDPLWKGPAKLLWKGEGAVVIQDNSDIKVVPRRKAKIIRD).

As to quaternary structure, homotrimer; further assembles as hexamers of trimers. Interacts with gp41 (via C-terminus). Interacts with host CALM1; this interaction induces a conformational change in the Matrix protein, triggering exposure of the myristate group. Interacts with host AP3D1; this interaction allows the polyprotein trafficking to multivesicular bodies during virus assembly. Part of the pre-integration complex (PIC) which is composed of viral genome, matrix protein, Vpr and integrase. In terms of assembly, homodimer; the homodimer further multimerizes as homohexamers or homopentamers. Interacts with human PPIA/CYPA; This interaction stabilizes the capsid. Interacts with human NUP153. Interacts with host PDZD8; this interaction stabilizes the capsid. Interacts with monkey TRIM5; this interaction destabilizes the capsid. Homodimer, whose active site consists of two apposed aspartic acid residues. As to quaternary structure, heterodimer of p66 RT and p51 RT (RT p66/p51). Heterodimerization of RT is essential for DNA polymerase activity. The overall folding of the subdomains is similar in p66 RT and p51 RT but the spatial arrangements of the subdomains are dramatically different. In terms of assembly, homotetramer; may further associate as a homohexadecamer. Part of the pre-integration complex (PIC) which is composed of viral genome, matrix protein, Vpr and integrase. Interacts with human SMARCB1/INI1 and human PSIP1/LEDGF isoform 1. Interacts with human KPNA3; this interaction might play a role in nuclear import of the pre-integration complex. Interacts with human NUP153; this interaction might play a role in nuclear import of the pre-integration complex. Mg(2+) serves as cofactor. Specific enzymatic cleavages by the viral protease yield mature proteins. The protease is released by autocatalytic cleavage. The polyprotein is cleaved during and after budding, this process is termed maturation. Proteolytic cleavage of p66 RT removes the RNase H domain to yield the p51 RT subunit. Nucleocapsid protein p7 might be further cleaved after virus entry. Post-translationally, tyrosine phosphorylated presumably in the virion by a host kinase. Phosphorylation is apparently not a major regulator of membrane association. In terms of processing, phosphorylated possibly by host MAPK1; this phosphorylation is necessary for Pin1-mediated virion uncoating. Methylated by host PRMT6, impairing its function by reducing RNA annealing and the initiation of reverse transcription.

The protein localises to the host cell membrane. It localises to the host endosome. Its subcellular location is the host multivesicular body. The protein resides in the virion membrane. It is found in the host nucleus. The protein localises to the host cytoplasm. It localises to the virion. It catalyses the reaction Specific for a P1 residue that is hydrophobic, and P1' variable, but often Pro.. The enzyme catalyses Endohydrolysis of RNA in RNA/DNA hybrids. Three different cleavage modes: 1. sequence-specific internal cleavage of RNA. Human immunodeficiency virus type 1 and Moloney murine leukemia virus enzymes prefer to cleave the RNA strand one nucleotide away from the RNA-DNA junction. 2. RNA 5'-end directed cleavage 13-19 nucleotides from the RNA end. 3. DNA 3'-end directed cleavage 15-20 nucleotides away from the primer terminus.. The catalysed reaction is 3'-end directed exonucleolytic cleavage of viral RNA-DNA hybrid.. It carries out the reaction DNA(n) + a 2'-deoxyribonucleoside 5'-triphosphate = DNA(n+1) + diphosphate. With respect to regulation, protease: The viral protease is inhibited by many synthetic protease inhibitors (PIs), such as amprenavir, atazanavir, indinavir, loprinavir, nelfinavir, ritonavir and saquinavir. Use of protease inhibitors in tritherapy regimens permit more ambitious therapeutic strategies. Reverse transcriptase/ribonuclease H: RT can be inhibited either by nucleoside RT inhibitors (NRTIs) or by non nucleoside RT inhibitors (NNRTIs). NRTIs act as chain terminators, whereas NNRTIs inhibit DNA polymerization by binding a small hydrophobic pocket near the RT active site and inducing an allosteric change in this region. Classical NRTIs are abacavir, adefovir (PMEA), didanosine (ddI), lamivudine (3TC), stavudine (d4T), tenofovir (PMPA), zalcitabine (ddC), and zidovudine (AZT). Classical NNRTIs are atevirdine (BHAP U-87201E), delavirdine, efavirenz (DMP-266), emivirine (I-EBU), and nevirapine (BI-RG-587). The tritherapies used as a basic effective treatment of AIDS associate two NRTIs and one NNRTI. Mediates, with Gag polyprotein, the essential events in virion assembly, including binding the plasma membrane, making the protein-protein interactions necessary to create spherical particles, recruiting the viral Env proteins, and packaging the genomic RNA via direct interactions with the RNA packaging sequence (Psi). Gag-Pol polyprotein may regulate its own translation, by the binding genomic RNA in the 5'-UTR. At low concentration, the polyprotein would promote translation, whereas at high concentration, the polyprotein would encapsidate genomic RNA and then shut off translation. In terms of biological role, targets the polyprotein to the plasma membrane via a multipartite membrane-binding signal, that includes its myristoylated N-terminus. Matrix protein is part of the pre-integration complex. Implicated in the release from host cell mediated by Vpu. Binds to RNA. Its function is as follows. Forms the conical core that encapsulates the genomic RNA-nucleocapsid complex in the virion. Most core are conical, with only 7% tubular. The core is constituted by capsid protein hexamer subunits. The core is disassembled soon after virion entry. Host restriction factors such as TRIM5-alpha or TRIMCyp bind retroviral capsids and cause premature capsid disassembly, leading to blocks in reverse transcription. Capsid restriction by TRIM5 is one of the factors which restricts HIV-1 to the human species. Host PIN1 apparently facilitates the virion uncoating. On the other hand, interactions with PDZD8 or CYPA stabilize the capsid. Functionally, encapsulates and protects viral dimeric unspliced genomic RNA (gRNA). Binds these RNAs through its zinc fingers. Acts as a nucleic acid chaperone which is involved in rearangement of nucleic acid secondary structure during gRNA retrotranscription. Also facilitates template switch leading to recombination. As part of the polyprotein, participates in gRNA dimerization, packaging, tRNA incorporation and virion assembly. Aspartyl protease that mediates proteolytic cleavages of Gag and Gag-Pol polyproteins during or shortly after the release of the virion from the plasma membrane. Cleavages take place as an ordered, step-wise cascade to yield mature proteins. This process is called maturation. Displays maximal activity during the budding process just prior to particle release from the cell. Also cleaves Nef and Vif, probably concomitantly with viral structural proteins on maturation of virus particles. Hydrolyzes host EIF4GI and PABP1 in order to shut off the capped cellular mRNA translation. The resulting inhibition of cellular protein synthesis serves to ensure maximal viral gene expression and to evade host immune response. Also mediates cleavage of host YTHDF3. Mediates cleavage of host CARD8, thereby activating the CARD8 inflammasome, leading to the clearance of latent HIV-1 in patient CD4(+) T-cells after viral reactivation; in contrast, HIV-1 can evade CARD8-sensing when its protease remains inactive in infected cells prior to viral budding. In terms of biological role, multifunctional enzyme that converts the viral RNA genome into dsDNA in the cytoplasm, shortly after virus entry into the cell. This enzyme displays a DNA polymerase activity that can copy either DNA or RNA templates, and a ribonuclease H (RNase H) activity that cleaves the RNA strand of RNA-DNA heteroduplexes in a partially processive 3' to 5' endonucleasic mode. Conversion of viral genomic RNA into dsDNA requires many steps. A tRNA(3)-Lys binds to the primer-binding site (PBS) situated at the 5'-end of the viral RNA. RT uses the 3' end of the tRNA primer to perform a short round of RNA-dependent minus-strand DNA synthesis. The reading proceeds through the U5 region and ends after the repeated (R) region which is present at both ends of viral RNA. The portion of the RNA-DNA heteroduplex is digested by the RNase H, resulting in a ssDNA product attached to the tRNA primer. This ssDNA/tRNA hybridizes with the identical R region situated at the 3' end of viral RNA. This template exchange, known as minus-strand DNA strong stop transfer, can be either intra- or intermolecular. RT uses the 3' end of this newly synthesized short ssDNA to perform the RNA-dependent minus-strand DNA synthesis of the whole template. RNase H digests the RNA template except for two polypurine tracts (PPTs) situated at the 5'-end and near the center of the genome. It is not clear if both polymerase and RNase H activities are simultaneous. RNase H probably can proceed both in a polymerase-dependent (RNA cut into small fragments by the same RT performing DNA synthesis) and a polymerase-independent mode (cleavage of remaining RNA fragments by free RTs). Secondly, RT performs DNA-directed plus-strand DNA synthesis using the PPTs that have not been removed by RNase H as primers. PPTs and tRNA primers are then removed by RNase H. The 3' and 5' ssDNA PBS regions hybridize to form a circular dsDNA intermediate. Strand displacement synthesis by RT to the PBS and PPT ends produces a blunt ended, linear dsDNA copy of the viral genome that includes long terminal repeats (LTRs) at both ends. Its function is as follows. Catalyzes viral DNA integration into the host chromosome, by performing a series of DNA cutting and joining reactions. This enzyme activity takes place after virion entry into a cell and reverse transcription of the RNA genome in dsDNA. The first step in the integration process is 3' processing. This step requires a complex comprising the viral genome, matrix protein, Vpr and integrase. This complex is called the pre-integration complex (PIC). The integrase protein removes 2 nucleotides from each 3' end of the viral DNA, leaving recessed CA OH's at the 3' ends. In the second step, the PIC enters cell nucleus. This process is mediated through integrase and Vpr proteins, and allows the virus to infect a non dividing cell. This ability to enter the nucleus is specific of lentiviruses, other retroviruses cannot and rely on cell division to access cell chromosomes. In the third step, termed strand transfer, the integrase protein joins the previously processed 3' ends to the 5' ends of strands of target cellular DNA at the site of integration. The 5'-ends are produced by integrase-catalyzed staggered cuts, 5 bp apart. A Y-shaped, gapped, recombination intermediate results, with the 5'-ends of the viral DNA strands and the 3' ends of target DNA strands remaining unjoined, flanking a gap of 5 bp. The last step is viral DNA integration into host chromosome. This involves host DNA repair synthesis in which the 5 bp gaps between the unjoined strands are filled in and then ligated. Since this process occurs at both cuts flanking the HIV genome, a 5 bp duplication of host DNA is produced at the ends of HIV-1 integration. Alternatively, Integrase may catalyze the excision of viral DNA just after strand transfer, this is termed disintegration. This is Gag-Pol polyprotein (gag-pol) from Human immunodeficiency virus type 1 group M subtype B (strain 89.6) (HIV-1).